The following is a 386-amino-acid chain: Putative gustatory receptor 22b (386 aa).

The Cytoplasmic segment spans residues 1-48 (MFGSSREIRPYLARQMLKTTLYGSWLLGIFPFTLDSGKRIRQLRRSRC). Residues 49-69 (LTLYGLVLNYFLIFTLIRLAF) form a helical membrane-spanning segment. Residues 70–89 (EYRKHKLEAFKRNPVLEMIN) are Extracellular-facing. The chain crosses the membrane as a helical span at residues 90–110 (VVIGIINVLSALIVHFMNFWG). Residues 111–155 (SRKVGEICNELLILEYQDFEGLNGRNCPNFNCFVIQKCLTILGQL) are Cytoplasmic-facing. Residues 156–176 (LSFFTLNFALPGLEFHICLVL) form a helical membrane-spanning segment. Topologically, residues 177-178 (LS) are extracellular. A helical transmembrane segment spans residues 179–199 (CLMEFSLNLNIMHYHVGVLLI). At 200-254 (YRYVWLINEQLKDLVSQLKLNPETDFSRIHQFLSLYKRLLELNRKLVIAYEYQMT) the chain is on the cytoplasmic side. A helical transmembrane segment spans residues 255–275 (LFIIAQLSGNIVVIYFLIVYG). Residues 276-282 (LSMRTYS) lie on the Extracellular side of the membrane. The chain crosses the membrane as a helical span at residues 283 to 303 (IFLVAFPNSLLINIWDFWLCI). At 304–363 (AACDLTEKAGDETAIILKIFSDLEHRDDKLEMSVNEFAWLCSHRKFRFQLCGLFSMNCRM) the chain is on the cytoplasmic side. The chain crosses the membrane as a helical span at residues 364–384 (GFKMIITTFLYLVYLVQFDYM). Residues 385 to 386 (NL) lie on the Extracellular side of the membrane.

Belongs to the insect chemoreceptor superfamily. Gustatory receptor (GR) family. Gr22e subfamily. As to expression, expressed in taste bristles in the foreleg and labial palps. In larvae, is expressed in neurons of the dorsal and posterior pharyngeal sense organs. Expressed in taste neurons that mediate sensitivity to bitter compounds.

The protein localises to the cell membrane. In terms of biological role, probable gustatory receptor which mediates acceptance or avoidance behavior, depending on its substrates. Seems to be involved in the sensing of bitter taste since it is expressed in neurons that mediate sensitivity to bitter compounds. This is Putative gustatory receptor 22b from Drosophila melanogaster (Fruit fly).